The primary structure comprises 143 residues: MPPKKKLVKTFTLQLPAGQATPAPPVGPALGQHGVNIMEFCKSYNAQTESQRGDIVPAEISVYEDRTFTFVLKTPPAARLLIKAAGVAKGSGVPHMEKVGQVSRAQLREIAEKKMADLNANDLDQAEKIIAGTARSMGLNVVD.

Belongs to the universal ribosomal protein uL11 family. As to quaternary structure, part of the ribosomal stalk of the 50S ribosomal subunit. Interacts with L10 and the large rRNA to form the base of the stalk. L10 forms an elongated spine to which L12 dimers bind in a sequential fashion forming a multimeric L10(L12)X complex. In terms of processing, one or more lysine residues are methylated.

In terms of biological role, forms part of the ribosomal stalk which helps the ribosome interact with GTP-bound translation factors. The protein is Large ribosomal subunit protein uL11 of Salinispora tropica (strain ATCC BAA-916 / DSM 44818 / JCM 13857 / NBRC 105044 / CNB-440).